We begin with the raw amino-acid sequence, 220 residues long: Uracil-DNA glycosylase (220 aa).

The Proton acceptor role is filled by Asp65.

This sequence belongs to the uracil-DNA glycosylase (UDG) superfamily. UNG family.

Its subcellular location is the cytoplasm. It catalyses the reaction Hydrolyzes single-stranded DNA or mismatched double-stranded DNA and polynucleotides, releasing free uracil.. Excises uracil residues from the DNA which can arise as a result of misincorporation of dUMP residues by DNA polymerase or due to deamination of cytosine. The sequence is that of Uracil-DNA glycosylase from Bacteroides thetaiotaomicron (strain ATCC 29148 / DSM 2079 / JCM 5827 / CCUG 10774 / NCTC 10582 / VPI-5482 / E50).